A 161-amino-acid chain; its full sequence is SsrA-binding protein (161 aa).

The interval 138–161 is disordered; that stretch reads DKRTDSKEKDWNRDKARIMKSSLR. Residues 139–154 show a composition bias toward basic and acidic residues; the sequence is KRTDSKEKDWNRDKAR.

This sequence belongs to the SmpB family.

The protein resides in the cytoplasm. Required for rescue of stalled ribosomes mediated by trans-translation. Binds to transfer-messenger RNA (tmRNA), required for stable association of tmRNA with ribosomes. tmRNA and SmpB together mimic tRNA shape, replacing the anticodon stem-loop with SmpB. tmRNA is encoded by the ssrA gene; the 2 termini fold to resemble tRNA(Ala) and it encodes a 'tag peptide', a short internal open reading frame. During trans-translation Ala-aminoacylated tmRNA acts like a tRNA, entering the A-site of stalled ribosomes, displacing the stalled mRNA. The ribosome then switches to translate the ORF on the tmRNA; the nascent peptide is terminated with the 'tag peptide' encoded by the tmRNA and targeted for degradation. The ribosome is freed to recommence translation, which seems to be the essential function of trans-translation. This Aliivibrio fischeri (strain ATCC 700601 / ES114) (Vibrio fischeri) protein is SsrA-binding protein.